The primary structure comprises 40 residues: Small polypeptide DEVIL 6 (40 aa).

The interval 9–40 (SSSRGLGGVLREQRAKLYIIKRCVVMLLCWQD) is required for DVL/RTFL small polypeptide activity. The helical transmembrane segment at 12 to 28 (RGLGGVLREQRAKLYII) threads the bilayer.

It belongs to the DVL/RTFL small polypeptides family.

It localises to the cell membrane. Small polypeptide acting as a regulatory molecule which coordinates cellular responses required for differentiation, growth and development, probably by restricting polar cell proliferation in lateral organs and coordinating socket cell recruitment and differentiation at trichome sites. This chain is Small polypeptide DEVIL 6, found in Arabidopsis thaliana (Mouse-ear cress).